The sequence spans 352 residues: uncharacterized protein (352 aa).

The next 8 membrane-spanning stretches (helical) occupy residues Phe6–Pro26, Phe30–Ile50, Ile76–Ile96, Glu151–Leu171, Phe197–Ile217, Val226–Leu246, Trp291–Ala311, and Leu330–Phe350.

It belongs to the CitM (TC 2.A.11) transporter family.

The protein localises to the cell membrane. This is an uncharacterized protein from Methanocaldococcus jannaschii (strain ATCC 43067 / DSM 2661 / JAL-1 / JCM 10045 / NBRC 100440) (Methanococcus jannaschii).